Reading from the N-terminus, the 87-residue chain is CRISPR-associated endoribonuclease Cas2 (87 aa).

Aspartate 8 is a Mg(2+) binding site.

Belongs to the CRISPR-associated endoribonuclease Cas2 protein family. As to quaternary structure, homodimer, forms a heterotetramer with a Cas1 homodimer. It depends on Mg(2+) as a cofactor.

CRISPR (clustered regularly interspaced short palindromic repeat), is an adaptive immune system that provides protection against mobile genetic elements (viruses, transposable elements and conjugative plasmids). CRISPR clusters contain sequences complementary to antecedent mobile elements and target invading nucleic acids. CRISPR clusters are transcribed and processed into CRISPR RNA (crRNA). Functions as a ssRNA-specific endoribonuclease. Involved in the integration of spacer DNA into the CRISPR cassette. This Dictyoglomus turgidum (strain DSM 6724 / Z-1310) protein is CRISPR-associated endoribonuclease Cas2.